Here is a 225-residue protein sequence, read N- to C-terminus: 3-dehydroquinate dehydratase (225 aa).

Residues 30-32 and arginine 62 each bind 3-dehydroquinate; that span reads EWR. Histidine 118 serves as the catalytic Proton donor/acceptor. Lysine 143 (schiff-base intermediate with substrate) is an active-site residue. Arginine 186, serine 205, and glutamine 209 together coordinate 3-dehydroquinate.

The protein belongs to the type-I 3-dehydroquinase family. As to quaternary structure, homodimer.

The catalysed reaction is 3-dehydroquinate = 3-dehydroshikimate + H2O. It participates in metabolic intermediate biosynthesis; chorismate biosynthesis; chorismate from D-erythrose 4-phosphate and phosphoenolpyruvate: step 3/7. Functionally, involved in the third step of the chorismate pathway, which leads to the biosynthesis of aromatic amino acids. Catalyzes the cis-dehydration of 3-dehydroquinate (DHQ) and introduces the first double bond of the aromatic ring to yield 3-dehydroshikimate. In Streptococcus mutans serotype c (strain ATCC 700610 / UA159), this protein is 3-dehydroquinate dehydratase.